We begin with the raw amino-acid sequence, 872 residues long: Bifunctional heparan sulfate N-deacetylase/N-sulfotransferase 4 (872 aa).

Over 1–13 (MNLILKFRRSFRT) the chain is Cytoplasmic. A helical; Signal-anchor for type II membrane protein transmembrane segment spans residues 14-34 (LIVLLATFCLVSILISAYFLY). The Lumenal segment spans residues 35-872 (SGYKQEMTLI…WLRQELQKVR (838 aa)). The segment at 36–588 (GYKQEMTLIE…KRHKDIWSRE (553 aa)) is heparan sulfate N-deacetylase 4. Residues Asn-226, Asn-341, and Asn-391 are each glycosylated (N-linked (GlcNAc...) asparagine). Residues 589 to 872 (KTCDHLPKFL…WLRQELQKVR (284 aa)) are heparan sulfate N-sulfotransferase 4. Lys-604 acts as the For sulfotransferase activity in catalysis. Residue 604-608 (KTGTT) participates in 3'-phosphoadenylyl sulfate binding. Asn-657 is a glycosylation site (N-linked (GlcNAc...) asparagine). Residue Ser-702 coordinates 3'-phosphoadenylyl sulfate. Asn-793 is a glycosylation site (N-linked (GlcNAc...) asparagine). The cysteines at positions 808 and 818 are disulfide-linked. 823-827 (KGRKY) contributes to the 3'-phosphoadenylyl sulfate binding site.

The protein belongs to the sulfotransferase 1 family. NDST subfamily. In terms of assembly, monomer. In terms of tissue distribution, expressed at low level in brain and throughout embryogenesis. Not expressed in other tissues.

It localises to the golgi apparatus membrane. It catalyses the reaction alpha-D-glucosaminyl-[heparan sulfate](n) + 3'-phosphoadenylyl sulfate = N-sulfo-alpha-D-glucosaminyl-[heparan sulfate](n) + adenosine 3',5'-bisphosphate + 2 H(+). It participates in glycan metabolism; heparan sulfate biosynthesis. Its pathway is glycan metabolism; heparin biosynthesis. Essential bifunctional enzyme that catalyzes both the N-deacetylation and the N-sulfation of glucosamine (GlcNAc) of the glycosaminoglycan in heparan sulfate. Modifies the GlcNAc-GlcA disaccharide repeating sugar backbone to make N-sulfated heparosan, a prerequisite substrate for later modifications in heparin biosynthesis. Has low deacetylase activity but high sulfotransferase activity. This is Bifunctional heparan sulfate N-deacetylase/N-sulfotransferase 4 (Ndst4) from Mus musculus (Mouse).